A 605-amino-acid chain; its full sequence is Granule-bound starch synthase 1, chloroplastic/amyloplastic (605 aa).

A chloroplast-targeting transit peptide spans 1–72; it reads MAALATSQLV…GGRFPSLVVC (72 aa). Lys91 provides a ligand contact to ADP-alpha-D-glucose.

It belongs to the glycosyltransferase 1 family. Bacterial/plant glycogen synthase subfamily.

It is found in the plastid. The protein resides in the chloroplast. The protein localises to the amyloplast. The catalysed reaction is an NDP-alpha-D-glucose + [(1-&gt;4)-alpha-D-glucosyl](n) = [(1-&gt;4)-alpha-D-glucosyl](n+1) + a ribonucleoside 5'-diphosphate + H(+). Its pathway is glycan biosynthesis; starch biosynthesis. Functionally, required for the synthesis of amylose in endosperm. The polypeptide is Granule-bound starch synthase 1, chloroplastic/amyloplastic (WAXY) (Zea mays (Maize)).